The sequence spans 530 residues: MFS transporter PfmaC (530 aa).

The tract at residues 41 to 76 (TTAVSDGDNQSSTMSGKTAAGDATSPASGSGSGGWF) is disordered. Polar residues predominate over residues 42 to 56 (TAVSDGDNQSSTMSG). Residues 59–69 (AAGDATSPASG) show a composition bias toward low complexity. 10 helical membrane-spanning segments follow: residues 165–182 (YWLP…LGMY), 195–215 (FFIG…LGCW), 226–246 (ALFV…QAAL), 261–281 (WLFI…LFCF), 324–344 (IFTS…SLTV), 369–389 (NIPT…GFVS), 396–416 (GPVC…FTAW), 422–442 (LLMA…LLAG), 456–476 (AFIL…FQQL), and 493–513 (PSAL…IPLL).

This sequence belongs to the major facilitator superfamily. Allantoate permease family.

It localises to the cell membrane. Its function is as follows. MFS transporter; part of the gene cluster that mediates the biosynthesis of dihydroxynaphthalene (DHN)-melanin, a bluish-green pigment forming a dark layer in the conidial wall that protects the conidia from UV radiations. This chain is MFS transporter PfmaC, found in Pestalotiopsis fici (strain W106-1 / CGMCC3.15140).